The sequence spans 217 residues: Oxygen regulatory protein NreC (217 aa).

Positions 2–119 (KIVIADDHAV…QLLLAIRTVY (118 aa)) constitute a Response regulatory domain. Asp-53 is subject to 4-aspartylphosphate. One can recognise an HTH luxR-type domain in the interval 148 to 213 (TSDPFKILSK…ELVEYALKKK (66 aa)). Residues 172–191 (NKEIAEKLFVSVKTVEAHKT) constitute a DNA-binding region (H-T-H motif).

Phosphorylated by NreB.

Its subcellular location is the cytoplasm. Member of the two-component regulatory system NreB/NreC involved in the control of dissimilatory nitrate/nitrite reduction in response to oxygen. Phosphorylated NreC binds to a GC-rich palindromic sequence at the promoters of the nitrate (narGHJI) and nitrite (nir) reductase operons, as well as the putative nitrate transporter gene narT, and activates their expression. This is Oxygen regulatory protein NreC (nreC) from Staphylococcus aureus (strain bovine RF122 / ET3-1).